A 431-amino-acid chain; its full sequence is STE20-related kinase adapter protein alpha (431 aa).

A phosphoserine mark is found at Ser-2 and Ser-46. Positions 69 to 379 constitute a Protein kinase domain; sequence YELLTVIGKG…ASTLLNHSFF (311 aa). Positions 310–347 are disordered; it reads LTMSPSRSVANSGLSDSLTTSTPRPSNGDSPSHPYHRT. The segment covering 312–339 has biased composition (polar residues); that stretch reads MSPSRSVANSGLSDSLTTSTPRPSNGDS. Thr-329 and Thr-419 each carry phosphothreonine; by LKB1.

It belongs to the protein kinase superfamily. STE Ser/Thr protein kinase family. STE20 subfamily. As to quaternary structure, component of a trimeric complex composed of STK11/LKB1, STRAD (STRADA or STRADB) and CAB39/MO25 (CAB39/MO25alpha or CAB39L/MO25beta): the complex tethers STK11/LKB1 in the cytoplasm and stimulates its catalytic activity.

The protein localises to the nucleus. The protein resides in the cytoplasm. Its function is as follows. Pseudokinase which, in complex with CAB39/MO25 (CAB39/MO25alpha or CAB39L/MO25beta), binds to and activates STK11/LKB1. Adopts a closed conformation typical of active protein kinases and binds STK11/LKB1 as a pseudosubstrate, promoting conformational change of STK11/LKB1 in an active conformation. The chain is STE20-related kinase adapter protein alpha (STRADA) from Homo sapiens (Human).